The primary structure comprises 290 residues: Shikimate dehydrogenase (NADP(+)) (290 aa).

Shikimate is bound by residues 18–20 and T66; that span reads SYS. K70 (proton acceptor) is an active-site residue. Residue E82 coordinates NADP(+). Shikimate contacts are provided by N91 and D106. Residues 130–134 and M229 contribute to the NADP(+) site; that span reads GSGGA. Y231 serves as a coordination point for shikimate. G252 is an NADP(+) binding site.

This sequence belongs to the shikimate dehydrogenase family. As to quaternary structure, homodimer.

The enzyme catalyses shikimate + NADP(+) = 3-dehydroshikimate + NADPH + H(+). The protein operates within metabolic intermediate biosynthesis; chorismate biosynthesis; chorismate from D-erythrose 4-phosphate and phosphoenolpyruvate: step 4/7. Functionally, involved in the biosynthesis of the chorismate, which leads to the biosynthesis of aromatic amino acids. Catalyzes the reversible NADPH linked reduction of 3-dehydroshikimate (DHSA) to yield shikimate (SA). This chain is Shikimate dehydrogenase (NADP(+)), found in Chlorobium phaeovibrioides (strain DSM 265 / 1930) (Prosthecochloris vibrioformis (strain DSM 265)).